The chain runs to 421 residues: Testin (421 aa).

The PET domain occupies 92-199 (MILTNPVAAK…GDVKLPREMD (108 aa)). Residues 133 to 164 (EKQPVAGSEGAQYRKKQLAKQLPAHDQDPSKC) are disordered. The segment covering 155–164 (PAHDQDPSKC) has biased composition (basic and acidic residues). LIM zinc-binding domains are found at residues 234 to 297 (YSCY…CDSE), 299 to 359 (PRCA…NHAV), and 362 to 421 (QGCH…KMMS).

The protein belongs to the prickle / espinas / testin family. As to quaternary structure, interacts via LIM domain 1 with ZYX. Interacts (via LIM domain 3) with ENAH and VASP. Interacts with ALKBH4, talin, actin, alpha-actinin, GRIP1 and PXN. Interacts (via LIM domain 2) with ACTL7A (via N-terminus). Heterodimer with ACTL7A; the heterodimer interacts with ENAH to form a heterotrimer.

It is found in the cytoplasm. The protein resides in the cell junction. Its subcellular location is the focal adhesion. Scaffold protein that may play a role in cell adhesion, cell spreading and in the reorganization of the actin cytoskeleton. Plays a role in the regulation of cell proliferation. May act as a tumor suppressor. The chain is Testin (TES) from Neofelis nebulosa (Clouded leopard).